We begin with the raw amino-acid sequence, 457 residues long: Glutamate--tRNA ligase 2 (457 aa).

Residues 8–18 carry the 'HIGH' region motif; that stretch reads PSPTGYIHIGN. A 'KMSKS' region motif is present at residues 249 to 253; the sequence is GFSKR. Position 252 (K252) interacts with ATP.

This sequence belongs to the class-I aminoacyl-tRNA synthetase family. Glutamate--tRNA ligase type 1 subfamily. Monomer.

The protein resides in the cytoplasm. The catalysed reaction is tRNA(Glu) + L-glutamate + ATP = L-glutamyl-tRNA(Glu) + AMP + diphosphate. Catalyzes the attachment of glutamate to tRNA(Glu) in a two-step reaction: glutamate is first activated by ATP to form Glu-AMP and then transferred to the acceptor end of tRNA(Glu). In Bartonella tribocorum (strain CIP 105476 / IBS 506), this protein is Glutamate--tRNA ligase 2.